We begin with the raw amino-acid sequence, 434 residues long: Putative MgpC-like protein MPN_149 (434 aa).

Disordered stretches follow at residues 168–193 (GSGQ…PKAV) and 215–267 (EPLD…DNNG). The span at 170–184 (GQESSWNSQRSQKVL) shows a compositional bias: polar residues. Over residues 218–229 (DSTKDGKGKDES) the composition is skewed to basic and acidic residues. Residues 248 to 267 (STGSQMAAVTDSQQSGDNNG) show a composition bias toward polar residues.

Belongs to the MgpC family.

The chain is Putative MgpC-like protein MPN_149 from Mycoplasma pneumoniae (strain ATCC 29342 / M129 / Subtype 1) (Mycoplasmoides pneumoniae).